The chain runs to 1138 residues: Lysylphosphatidylglycerol biosynthesis bifunctional protein LysX (1138 aa).

Positions 1–15 (MALDTPSSDLPVSTD) are enriched in polar residues. The segment at 1–34 (MALDTPSSDLPVSTDDTAEHQPTPAHRPPSAADR) is disordered. The phosphatidylglycerol lysyltransferase stretch occupies residues 1–646 (MALDTPSSDL…LIAQLESEED (646 aa)). 6 helical membrane passes run 56–76 (IAGT…IFPL), 92–112 (IVSL…VAIA), 119–139 (IAWW…ALLL), 155–175 (IQIW…IVTY), 190–210 (ALGV…GLVW), and 247–267 (IVID…AATV). Residues 647 to 1138 (RTAVEVHRPE…AFPMVKPTDA (492 aa)) are lysine--tRNA ligase. Residues 698–772 (VTIAGRVTKM…GELSVLIDAW (75 aa)) constitute a DNA-binding region (OB). Residues Asp1048 and Glu1055 each coordinate Mg(2+).

This sequence in the N-terminal section; belongs to the LPG synthetase family. In the C-terminal section; belongs to the class-II aminoacyl-tRNA synthetase family. It depends on Mg(2+) as a cofactor.

It is found in the cell membrane. The catalysed reaction is tRNA(Lys) + L-lysine + ATP = L-lysyl-tRNA(Lys) + AMP + diphosphate. It carries out the reaction L-lysyl-tRNA(Lys) + a 1,2-diacyl-sn-glycero-3-phospho-(1'-sn-glycerol) = a 1,2-diacyl-sn-glycero-3-phospho-1'-(3'-O-L-lysyl)-sn-glycerol + tRNA(Lys). Its function is as follows. Catalyzes the production of L-lysyl-tRNA(Lys)transfer and the transfer of a lysyl group from L-lysyl-tRNA(Lys) to membrane-bound phosphatidylglycerol (PG), which produces lysylphosphatidylglycerol (LPG), one of the components of the bacterial membrane with a positive net charge. LPG synthesis contributes to the resistance to cationic antimicrobial peptides (CAMPs) and likely protects M.tuberculosis against the CAMPs produced by competiting microorganisms (bacteriocins). In fact, the modification of anionic phosphatidylglycerol with positively charged L-lysine results in repulsion of the peptides. The chain is Lysylphosphatidylglycerol biosynthesis bifunctional protein LysX (lysX) from Gordonia bronchialis (strain ATCC 25592 / DSM 43247 / BCRC 13721 / JCM 3198 / KCTC 3076 / NBRC 16047 / NCTC 10667) (Rhodococcus bronchialis).